Consider the following 116-residue polypeptide: Putative membrane protein insertion efficiency factor (116 aa).

It belongs to the UPF0161 family.

It localises to the cell inner membrane. Its function is as follows. Could be involved in insertion of integral membrane proteins into the membrane. This Bartonella tribocorum (strain CIP 105476 / IBS 506) protein is Putative membrane protein insertion efficiency factor.